The chain runs to 302 residues: Segregation and condensation protein A (302 aa).

Belongs to the ScpA family. In terms of assembly, component of a cohesin-like complex composed of ScpA, ScpB and the Smc homodimer, in which ScpA and ScpB bind to the head domain of Smc. The presence of the three proteins is required for the association of the complex with DNA.

Its subcellular location is the cytoplasm. In terms of biological role, participates in chromosomal partition during cell division. May act via the formation of a condensin-like complex containing Smc and ScpB that pull DNA away from mid-cell into both cell halves. This chain is Segregation and condensation protein A, found in Xylella fastidiosa (strain Temecula1 / ATCC 700964).